The primary structure comprises 223 residues: Coiled-coil domain-containing protein 124 (223 aa).

Residues 1–126 are disordered; that stretch reads MPKKFQGENT…AEKAKSHLEV (126 aa). Residues 15–82 are a coiled coil; that stretch reads ARARRAEAKA…LLEEEDSKLK (68 aa). Composition is skewed to basic and acidic residues over residues 18 to 74 and 99 to 126; these read RRAE…QRLL and QIED…HLEV. A phosphoserine mark is found at S141 and S194. The interval 204 to 223 is disordered; the sequence is WLRSPDNPMNQRAVPFNAPK.

This sequence belongs to the CCDC124 family. In terms of assembly, associates with translationally inactive ribosomes in the nonrotated state. Interacts with RASGEF1B. Ubiquitously expressed.

It localises to the cytoplasm. It is found in the cytoskeleton. The protein localises to the microtubule organizing center. Its subcellular location is the centrosome. The protein resides in the midbody. Ribosome-binding protein involved in ribosome hibernation: associates with translationally inactive ribosomes and stabilizes the nonrotated conformation of the 80S ribosome, thereby promoting ribosome preservation and storage. Also required for proper progression of late cytokinetic stages. The sequence is that of Coiled-coil domain-containing protein 124 from Homo sapiens (Human).